The sequence spans 132 residues: Fatty acid-binding protein, intestinal (132 aa).

At Ala2 the chain carries N-acetylalanine. Hexadecanoate is bound by residues Trp83 and Arg107. The tetradecanoate site is built by Trp83 and Arg107.

This sequence belongs to the calycin superfamily. Fatty-acid binding protein (FABP) family.

It localises to the cytoplasm. In terms of biological role, FABPs are thought to play a role in the intracellular transport of long-chain fatty acids and their acyl-CoA esters. FABP2 is probably involved in triglyceride-rich lipoprotein synthesis. Binds saturated long-chain fatty acids with a high affinity, but binds with a lower affinity to unsaturated long-chain fatty acids. FABP2 may also help maintain energy homeostasis by functioning as a lipid sensor. This chain is Fatty acid-binding protein, intestinal (FABP2), found in Sus scrofa (Pig).